The primary structure comprises 155 residues: uncharacterized protein (155 aa).

Positions 135-155 (SQANSKNDSNSKDDLPNPFSV) are disordered.

This is an uncharacterized protein from Acidianus convivator (ATV).